The primary structure comprises 425 residues: Serine--tRNA ligase (425 aa).

228–230 (TAE) is an L-serine binding site. Residue 259-261 (RSE) participates in ATP binding. Position 282 (glutamate 282) interacts with L-serine. An ATP-binding site is contributed by 346–349 (EIAS). Serine 382 is an L-serine binding site.

Belongs to the class-II aminoacyl-tRNA synthetase family. Type-1 seryl-tRNA synthetase subfamily. In terms of assembly, homodimer. The tRNA molecule binds across the dimer.

It is found in the cytoplasm. It carries out the reaction tRNA(Ser) + L-serine + ATP = L-seryl-tRNA(Ser) + AMP + diphosphate + H(+). The catalysed reaction is tRNA(Sec) + L-serine + ATP = L-seryl-tRNA(Sec) + AMP + diphosphate + H(+). It functions in the pathway aminoacyl-tRNA biosynthesis; selenocysteinyl-tRNA(Sec) biosynthesis; L-seryl-tRNA(Sec) from L-serine and tRNA(Sec): step 1/1. Catalyzes the attachment of serine to tRNA(Ser). Is also able to aminoacylate tRNA(Sec) with serine, to form the misacylated tRNA L-seryl-tRNA(Sec), which will be further converted into selenocysteinyl-tRNA(Sec). The protein is Serine--tRNA ligase of Rickettsia felis (strain ATCC VR-1525 / URRWXCal2) (Rickettsia azadi).